Reading from the N-terminus, the 321-residue chain is Taste receptor type 2 member 135 (321 aa).

Residues 1–28 (MGPIMSTGETSTAHTVLGCQITDKTVIT) lie on the Extracellular side of the membrane. Residues 29–49 (LFVILVFSCLVAVVGNGFIII) form a helical membrane-spanning segment. The Cytoplasmic portion of the chain corresponds to 50–75 (ALGMKWLLRRTLSAHNKLLISLAASR). A helical transmembrane segment spans residues 76–96 (FCLQCVVIGKNIYVFLNPSSF). Residues 97-106 (PYNPVIQLLN) are Extracellular-facing. The chain crosses the membrane as a helical span at residues 107-127 (LMWDFLTAATIWFCSLLGFFY). Over 128–149 (CVKIATLTHPVFVWLKYRLPGW) the chain is Cytoplasmic. Residues 150 to 170 (VPWMLLSAVGMSSLTSILCFI) traverse the membrane as a helical segment. Residues 171 to 207 (GNHMIYQNYARRGHQPWNATGNSLRHSLEKFYFISIK) lie on the Extracellular side of the membrane. A glycan (N-linked (GlcNAc...) asparagine) is linked at Asn-188. The helical transmembrane segment at 208–228 (IIMWTVPTVIFSIFMSLLLVS) threads the bilayer. Topologically, residues 229 to 253 (LVRHMKKTLLALSELRDVWAQAHFK) are cytoplasmic. The chain crosses the membrane as a helical span at residues 254–274 (ALLPLLSFIILFISCFLTLVL). Topologically, residues 275 to 286 (SSASSTPYQEFR) are extracellular. Residues 287–307 (YWMWQVVIHLCTVIHPIVILL) form a helical membrane-spanning segment. Residues 308–321 (SNPVLRVVMKRGCC) lie on the Cytoplasmic side of the membrane.

This sequence belongs to the G-protein coupled receptor T2R family.

It localises to the membrane. Its function is as follows. Putative taste receptor which may play a role in the perception of bitterness. The protein is Taste receptor type 2 member 135 of Rattus norvegicus (Rat).